Reading from the N-terminus, the 630-residue chain is Glutathione hydrolase proenzyme 1 (630 aa).

The Cytoplasmic segment spans residues 1 to 49 (MGINTSSAQSSGAASIARSSVNVKSGNRHLSSNKKSATSALEERASRPS). Residues 50-70 (ILVTFLVLAGTILSLYIWPIL) form a helical; Signal-anchor for type II membrane protein membrane-spanning segment. Residues 71 to 630 (SPDLFFANQR…SRKQAVAAAY (560 aa)) are Lumenal-facing. N-linked (GlcNAc...) asparagine glycosylation is present at asparagine 156. Arginine 165 serves as a coordination point for L-glutamate. Residues asparagine 180, asparagine 315, asparagine 397, and asparagine 417 are each glycosylated (N-linked (GlcNAc...) asparagine). The Nucleophile role is filled by threonine 441. L-glutamate contacts are provided by residues serine 459, asparagine 461, aspartate 483, 511–512 (SS), and 532–533 (GG). Asparagine 612 carries N-linked (GlcNAc...) asparagine glycosylation.

This sequence belongs to the gamma-glutamyltransferase family. Heterodimer composed of the light and heavy chains. The active site is located in the light chain. In terms of processing, cleaved by autocatalysis into a large and a small subunit.

It is found in the endoplasmic reticulum membrane. It carries out the reaction an N-terminal (5-L-glutamyl)-[peptide] + an alpha-amino acid = 5-L-glutamyl amino acid + an N-terminal L-alpha-aminoacyl-[peptide]. The enzyme catalyses glutathione + H2O = L-cysteinylglycine + L-glutamate. The catalysed reaction is an S-substituted glutathione + H2O = an S-substituted L-cysteinylglycine + L-glutamate. It participates in sulfur metabolism; glutathione metabolism. In terms of biological role, catalyzes the transfer of the gamma-glutamyl moiety of glutathione (GSH) and other gamma-glutamyl compounds to amino acids and peptides. Major GSH-degrading enzyme, catalyzing the hydrolytic release of L-glutamate from GSH. This Schizosaccharomyces pombe (strain 972 / ATCC 24843) (Fission yeast) protein is Glutathione hydrolase proenzyme 1 (ggt1).